The chain runs to 207 residues: Guanylate kinase (207 aa).

The Guanylate kinase-like domain maps to 17–197; it reads GRLVVLAGPS…SCDELVSLLV (181 aa). Residue 24 to 31 participates in ATP binding; that stretch reads GPSAVGKS.

It belongs to the guanylate kinase family.

It is found in the cytoplasm. The enzyme catalyses GMP + ATP = GDP + ADP. Its function is as follows. Essential for recycling GMP and indirectly, cGMP. The polypeptide is Guanylate kinase (Rhodococcus jostii (strain RHA1)).